A 615-amino-acid chain; its full sequence is Mitogen-activated protein kinase 18 (615 aa).

One can recognise a Protein kinase domain in the interval 25 to 316 (YRILEVIGKG…PAEALADPYF (292 aa)). ATP contacts are provided by residues 31-39 (IGKGSYGVV) and Lys-54. The active-site Proton acceptor is Asp-151. Residue Thr-187 is modified to Phosphothreonine. The TXY signature appears at 187–189 (TDY). Tyr-189 is subject to Phosphotyrosine. Thr-192 is modified (phosphothreonine). 2 disordered regions span residues 414–483 (RSTV…ESSV) and 510–544 (NTMTNPENRNIEASSFPPKPQNPVHQFSPTEPPAA). The span at 415–426 (STVHSTVVHSTS) shows a compositional bias: low complexity. Residues 445–459 (NGASSAGHPSTSAYP) show a composition bias toward polar residues. Residues 464-473 (GPPPRVPPSG) show a composition bias toward pro residues. Polar residues-rich tracts occupy residues 510–522 (NTMTNPENRNIEA) and 532–544 (PVHQFSPTEPPAA).

The protein belongs to the protein kinase superfamily. CMGC Ser/Thr protein kinase family. MAP kinase subfamily. In terms of assembly, interacts with PHS1. Binds to MAPKKK20. In terms of processing, dually phosphorylated on Thr-187 and Tyr-189, which activates the enzyme. Phosphorylated by MAPKKK20. Expressed in roots, seedlings, leaves, flower buds, flowers and siliques.

Its subcellular location is the nucleus. The protein resides in the cytoplasm. It carries out the reaction L-seryl-[protein] + ATP = O-phospho-L-seryl-[protein] + ADP + H(+). The catalysed reaction is L-threonyl-[protein] + ATP = O-phospho-L-threonyl-[protein] + ADP + H(+). With respect to regulation, activated by threonine and tyrosine phosphorylation. Inactivated by phosphatase PHS1. Functionally, mitogen-activated protein kinase (MAPK) that is specifically regulated by PHS1 and MAPKKK20 and mediates signaling that regulates cortical microtubule functions, maybe through regulation of microtubule dynamic instability. This Arabidopsis thaliana (Mouse-ear cress) protein is Mitogen-activated protein kinase 18.